Reading from the N-terminus, the 164-residue chain is 6,7-dimethyl-8-ribityllumazine synthase (164 aa).

5-amino-6-(D-ribitylamino)uracil-binding positions include Tyr-30, 61 to 63 (ALE), and 85 to 87 (CVI). 90–91 (ET) is a (2S)-2-hydroxy-3-oxobutyl phosphate binding site. The active-site Proton donor is His-93. Asn-118 lines the 5-amino-6-(D-ribitylamino)uracil pocket. Residue Arg-132 participates in (2S)-2-hydroxy-3-oxobutyl phosphate binding.

It belongs to the DMRL synthase family.

It catalyses the reaction (2S)-2-hydroxy-3-oxobutyl phosphate + 5-amino-6-(D-ribitylamino)uracil = 6,7-dimethyl-8-(1-D-ribityl)lumazine + phosphate + 2 H2O + H(+). The protein operates within cofactor biosynthesis; riboflavin biosynthesis; riboflavin from 2-hydroxy-3-oxobutyl phosphate and 5-amino-6-(D-ribitylamino)uracil: step 1/2. Functionally, catalyzes the formation of 6,7-dimethyl-8-ribityllumazine by condensation of 5-amino-6-(D-ribitylamino)uracil with 3,4-dihydroxy-2-butanone 4-phosphate. This is the penultimate step in the biosynthesis of riboflavin. The chain is 6,7-dimethyl-8-ribityllumazine synthase from Methylobacterium radiotolerans (strain ATCC 27329 / DSM 1819 / JCM 2831 / NBRC 15690 / NCIMB 10815 / 0-1).